The sequence spans 128 residues: Small ribosomal subunit protein eS8 (128 aa).

Positions 1 to 41 (MSYYQGNDSRKITGGQKGKNRDKRKYELGSPPTETKISDKD) are disordered.

The protein belongs to the eukaryotic ribosomal protein eS8 family. As to quaternary structure, part of the 30S ribosomal subunit.

The chain is Small ribosomal subunit protein eS8 from Sulfolobus acidocaldarius (strain ATCC 33909 / DSM 639 / JCM 8929 / NBRC 15157 / NCIMB 11770).